Consider the following 318-residue polypeptide: tRNA methyltransferase 10 homolog B (318 aa).

Positions Met-1–Gln-10 are enriched in basic and acidic residues. Positions Met-1–His-105 are disordered. The segment covering Ser-52–Asn-63 has biased composition (polar residues). Residues Met-64–Lys-83 show a composition bias toward basic residues. Residues Glu-72–Arg-93 are a coiled coil. Over residues Gln-84 to Asp-96 the composition is skewed to basic and acidic residues. One can recognise an SAM-dependent MTase TRM10-type domain in the interval Thr-114–Val-311.

Belongs to the class IV-like SAM-binding methyltransferase superfamily. TRM10 family.

It catalyses the reaction guanosine(9) in tRNA + S-adenosyl-L-methionine = N(1)-methylguanosine(9) in tRNA + S-adenosyl-L-homocysteine + H(+). Functionally, S-adenosyl-L-methionine-dependent guanine N(1)-methyltransferase that catalyzes the formation of N(1)-methylguanine at position 9 (m1G9) in tRNAs. Probably not able to catalyze formation of N(1)-methyladenine at position 9 (m1A9) in tRNAs. The polypeptide is tRNA methyltransferase 10 homolog B (Trmt10b) (Mus musculus (Mouse)).